The chain runs to 208 residues: Type 3 secretion system stator protein (208 aa).

Belongs to the SctL stator family. As to quaternary structure, the core secretion machinery of the T3SS is composed of approximately 20 different proteins, including cytoplasmic components, a base, an export apparatus and a needle. This subunit is part of the cytosolic complex.

It is found in the cytoplasm. Functionally, component of the type III secretion system (T3SS), also called injectisome, which is used to inject bacterial effector proteins into eukaryotic host cells. Acts as a regulator of the HrcN/SctN ATPase activity. This is Type 3 secretion system stator protein from Sinorhizobium fredii (strain NBRC 101917 / NGR234).